The sequence spans 300 residues: Probable protein phosphatase 2C 2 (300 aa).

The region spanning 23 to 298 (IFAASEMQGW…DNMTTILVYL (276 aa)) is the PPM-type phosphatase domain. Asp57, Gly58, Asp237, and Asp289 together coordinate Mn(2+).

This sequence belongs to the PP2C family. It depends on Mg(2+) as a cofactor. Mn(2+) is required as a cofactor.

It is found in the membrane. It carries out the reaction O-phospho-L-seryl-[protein] + H2O = L-seryl-[protein] + phosphate. It catalyses the reaction O-phospho-L-threonyl-[protein] + H2O = L-threonyl-[protein] + phosphate. Its function is as follows. Enzyme with a broad specificity. The protein is Probable protein phosphatase 2C 2 of Paramecium tetraurelia.